Reading from the N-terminus, the 339-residue chain is DNA-directed RNA polymerase subunit alpha (339 aa).

The interval 1–235 (MTIQKNWQEL…DQLNVFVNFE (235 aa)) is alpha N-terminal domain (alpha-NTD). The alpha C-terminal domain (alpha-CTD) stretch occupies residues 251 to 339 (FNPAFLKKVD…ELAKRFEDHY (89 aa)).

It belongs to the RNA polymerase alpha chain family. As to quaternary structure, homodimer. The RNAP catalytic core consists of 2 alpha, 1 beta, 1 beta' and 1 omega subunit. When a sigma factor is associated with the core the holoenzyme is formed, which can initiate transcription.

It carries out the reaction RNA(n) + a ribonucleoside 5'-triphosphate = RNA(n+1) + diphosphate. Functionally, DNA-dependent RNA polymerase catalyzes the transcription of DNA into RNA using the four ribonucleoside triphosphates as substrates. This is DNA-directed RNA polymerase subunit alpha from Afipia carboxidovorans (strain ATCC 49405 / DSM 1227 / KCTC 32145 / OM5) (Oligotropha carboxidovorans).